The chain runs to 462 residues: Serine--tRNA ligase, cytoplasmic (462 aa).

246–248 serves as a coordination point for L-serine; sequence TSE. ATP contacts are provided by residues 279-281 and Val295; that span reads RRE. Residue Glu302 participates in L-serine binding. Residue 366-369 participates in ATP binding; that stretch reads ELVS. Thr404 lines the L-serine pocket.

The protein belongs to the class-II aminoacyl-tRNA synthetase family. Type-1 seryl-tRNA synthetase subfamily. In terms of assembly, homodimer. The tRNA molecule binds across the dimer.

The protein resides in the cytoplasm. Its subcellular location is the cytosol. It catalyses the reaction tRNA(Ser) + L-serine + ATP = L-seryl-tRNA(Ser) + AMP + diphosphate + H(+). Functionally, catalyzes the attachment of serine to tRNA(Ser) in a two-step reaction: serine is first activated by ATP to form Ser-AMP and then transferred to the acceptor end of tRNA(Ser). The protein is Serine--tRNA ligase, cytoplasmic (SES1) of Candida albicans (strain SC5314 / ATCC MYA-2876) (Yeast).